The following is a 612-amino-acid chain: Cytoplasmic dynein 1 intermediate chain 2 (612 aa).

Basic and acidic residues-rich tracts occupy residues 1-13 (MSDK…ELER) and 20-43 (QIRE…KKEA). Disordered regions lie at residues 1–117 (MSDK…MAKI) and 129–188 (TYTK…EEKQ). At Ser-2 the chain carries N-acetylserine. At Ser-51 the chain carries Diphosphoserine. Ser-51 and Ser-84 each carry phosphoserine. The span at 82–91 (PSSKSVSTPS) shows a compositional bias: low complexity. Phosphothreonine is present on Thr-89. A phosphoserine mark is found at Ser-91, Ser-95, and Ser-98. Residues 164-188 (EKTLKKDEESDSKAPPHELTEEEKQ) are compositionally biased toward basic and acidic residues. 7 WD repeats span residues 251–300 (SKHR…TTPE), 304–344 (HCQS…RTPV), 353–394 (AHTH…HPQD), 403–443 (SKAV…AGIS), 448–493 (GHQG…PLYS), 496–536 (DNSD…EVPT), and 542–581 (EGNP…AVPR).

It belongs to the dynein intermediate chain family. In terms of assembly, homodimer. The cytoplasmic dynein 1 complex consists of two catalytic heavy chains (HCs) and a number of non-catalytic subunits presented by intermediate chains (ICs), light intermediate chains (LICs) and light chains (LCs); the composition seems to vary in respect to the IC, LIC and LC composition. The heavy chain homodimer serves as a scaffold for the probable homodimeric assembly of the respective non-catalytic subunits. The ICs and LICs bind directly to the HC dimer and the LCs assemble on the IC dimer. Interacts with DYNLT3. Interacts with DYNLT1. Interacts (dephosphorylated at Ser-84) with DCTN1. Interacts with BICD2. Interacts with SPEF2. Interacts with CFAP61. In terms of processing, the phosphorylation status of Ser-84 appears to be involved in dynactin-dependent target binding. Pyrophosphorylation by 5-diphosphoinositol pentakisphosphate (5-IP7) promotes interaction with DCTN1. Serine pyrophosphorylation is achieved by Mg(2+)-dependent, but enzyme independent transfer of a beta-phosphate from a inositol pyrophosphate to a pre-phosphorylated serine residue.

It is found in the cytoplasm. The protein localises to the cytoskeleton. Acts as one of several non-catalytic accessory components of the cytoplasmic dynein 1 complex that are thought to be involved in linking dynein to cargos and to adapter proteins that regulate dynein function. Cytoplasmic dynein 1 acts as a motor for the intracellular retrograde motility of vesicles and organelles along microtubules. The intermediate chains mediate the binding of dynein to dynactin via its 150 kDa component (p150-glued) DCTN1. Involved in membrane-transport, such as Golgi apparatus, late endosomes and lysosomes. The protein is Cytoplasmic dynein 1 intermediate chain 2 (DYNC1I2) of Bos taurus (Bovine).